Consider the following 135-residue polypeptide: Large ribosomal subunit protein uL16c (135 aa).

Belongs to the universal ribosomal protein uL16 family. As to quaternary structure, part of the 50S ribosomal subunit.

It localises to the plastid. The protein resides in the chloroplast. This chain is Large ribosomal subunit protein uL16c, found in Eucalyptus globulus subsp. globulus (Tasmanian blue gum).